The chain runs to 506 residues: Vinckepain-1 (506 aa).

The Cytoplasmic portion of the chain corresponds to 1–32; it reads MSDNIGQINFTIPGIQSLDENDTYLKINHKKT. Positions 1 to 262 are cleaved as a propeptide — activation peptide; sequence MSDNIGQINF…LISVDNKSKD (262 aa). The helical; Signal-anchor for type II membrane protein transmembrane segment at 33-53 threads the bilayer; it reads IKICAYAITAIALFFIGGVFF. The Lumenal portion of the chain corresponds to 54-506; that stretch reads KNQAKINALD…VGSDVFFPIY (453 aa). N-linked (GlcNAc...) asparagine glycosylation is found at N133 and N258. 4 disulfide bridges follow: C284–C326, C319–C359, C344–C364, and C413–C495. Residue C287 is part of the active site. N-linked (GlcNAc...) asparagine glycosylation occurs at N418. Catalysis depends on residues H419 and N470.

Belongs to the peptidase C1 family.

The protein localises to the membrane. Cysteine protease. This Plasmodium vinckei protein is Vinckepain-1.